The following is a 474-amino-acid chain: A-type ATP synthase subunit B (474 aa).

It belongs to the ATPase alpha/beta chains family. In terms of assembly, has multiple subunits with at least A(3), B(3), C, D, E, F, H, I and proteolipid K(x).

It is found in the cell membrane. Functionally, component of the A-type ATP synthase that produces ATP from ADP in the presence of a proton gradient across the membrane. The B chain is a regulatory subunit. This Halorubrum lacusprofundi (strain ATCC 49239 / DSM 5036 / JCM 8891 / ACAM 34) protein is A-type ATP synthase subunit B.